Here is a 306-residue protein sequence, read N- to C-terminus: Nuclear egress protein 1 (306 aa).

Residues 1–49 (MYDTDPHRRGSRPGPYHGKERRRSRSSAAGGTLGVVRRASRKSLPPHAR) are disordered. Residues 106 to 225 (CLTLSGMGYY…YVIFPGTSAH (120 aa)) form a CCCH-type zinc finger.

Belongs to the herpesviridae NEC1 protein family. Forms a heterohexameric complex with NEC2. Interacts with capsid vertex specific component 2/CVC2; this interaction directs the capsid to the host inner nuclear membrane to initiate budding. Phosphorylated at serine residues in the N-terminus. This phosphorylation regulates the localization within the inner nuclear membrane.

The protein localises to the host nucleus inner membrane. Its function is as follows. Plays an essential role in virion nuclear egress, the first step of virion release from infected cell. Within the host nucleus, NEC1 interacts with the newly formed capsid through the vertexes and directs it to the inner nuclear membrane by associating with NEC2. Induces the budding of the capsid at the inner nuclear membrane as well as its envelopment into the perinuclear space. There, the NEC1/NEC2 complex promotes the fusion of the enveloped capsid with the outer nuclear membrane and the subsequent release of the viral capsid into the cytoplasm where it will reach the secondary budding sites in the host Golgi or trans-Golgi network. This is Nuclear egress protein 1 from Human herpesvirus 1 (strain 17) (HHV-1).